The sequence spans 101 residues: Small ribosomal subunit protein uS14 (101 aa).

Belongs to the universal ribosomal protein uS14 family. As to quaternary structure, part of the 30S ribosomal subunit. Contacts proteins S3 and S10.

In terms of biological role, binds 16S rRNA, required for the assembly of 30S particles and may also be responsible for determining the conformation of the 16S rRNA at the A site. The polypeptide is Small ribosomal subunit protein uS14 (Idiomarina loihiensis (strain ATCC BAA-735 / DSM 15497 / L2-TR)).